Reading from the N-terminus, the 196-residue chain is Probable molybdenum cofactor guanylyltransferase (196 aa).

GTP is bound by residues 7–9, lysine 19, aspartate 68, and aspartate 93; that span reads LAG. Aspartate 93 contacts Mg(2+).

Belongs to the MobA family. Mg(2+) is required as a cofactor.

It localises to the cytoplasm. The catalysed reaction is Mo-molybdopterin + GTP + H(+) = Mo-molybdopterin guanine dinucleotide + diphosphate. In terms of biological role, transfers a GMP moiety from GTP to Mo-molybdopterin (Mo-MPT) cofactor (Moco or molybdenum cofactor) to form Mo-molybdopterin guanine dinucleotide (Mo-MGD) cofactor. This Pyrococcus furiosus (strain ATCC 43587 / DSM 3638 / JCM 8422 / Vc1) protein is Probable molybdenum cofactor guanylyltransferase.